Here is a 407-residue protein sequence, read N- to C-terminus: Imidazolonepropionase (407 aa).

The Fe(3+) site is built by histidine 74 and histidine 76. Residues histidine 74 and histidine 76 each contribute to the Zn(2+) site. 4-imidazolone-5-propanoate is bound by residues arginine 83, tyrosine 146, and histidine 179. Tyrosine 146 is an N-formimidoyl-L-glutamate binding site. Histidine 244 provides a ligand contact to Fe(3+). Histidine 244 is a binding site for Zn(2+). Glutamine 247 provides a ligand contact to 4-imidazolone-5-propanoate. Aspartate 319 provides a ligand contact to Fe(3+). Aspartate 319 contributes to the Zn(2+) binding site. The N-formimidoyl-L-glutamate site is built by asparagine 321 and glycine 323. Residue threonine 324 participates in 4-imidazolone-5-propanoate binding.

This sequence belongs to the metallo-dependent hydrolases superfamily. HutI family. Requires Zn(2+) as cofactor. Fe(3+) is required as a cofactor.

The protein localises to the cytoplasm. It catalyses the reaction 4-imidazolone-5-propanoate + H2O = N-formimidoyl-L-glutamate. It participates in amino-acid degradation; L-histidine degradation into L-glutamate; N-formimidoyl-L-glutamate from L-histidine: step 3/3. In terms of biological role, catalyzes the hydrolytic cleavage of the carbon-nitrogen bond in imidazolone-5-propanoate to yield N-formimidoyl-L-glutamate. It is the third step in the universal histidine degradation pathway. This chain is Imidazolonepropionase, found in Salmonella heidelberg (strain SL476).